The chain runs to 103 residues: Interleukin-8 (103 aa).

The first 25 residues, 1–25 (MTSKLAVAFLAVFLLSAALCEAAVL), serve as a signal peptide directing secretion. Residue Arg-27 is modified to Citrulline. Intrachain disulfides connect Cys-34–Cys-61 and Cys-36–Cys-77.

This sequence belongs to the intercrine alpha (chemokine CxC) family. Homodimer. Interacts with TNFAIP6 (via Link domain); this interaction interferes with chemokine binding to glycosaminoglycans. In terms of processing, citrullination at Arg-27 prevents proteolysis, and dampens tissue inflammation, it also enhances leukocytosis, possibly through impaired chemokine clearance from the blood circulation. In terms of tissue distribution, alveolar macrophages.

It localises to the secreted. Functionally, chemotactic factor that mediates inflammatory response by attracting neutrophils, basophils, and T-cells to clear pathogens and protect the host from infection. Also plays an important role in neutrophil activation. Released in response to an inflammatory stimulus, exerts its effect by binding to the G-protein-coupled receptors CXCR1 and CXCR2, primarily found in neutrophils, monocytes and endothelial cells. G-protein heterotrimer (alpha, beta, gamma subunits) constitutively binds to CXCR1/CXCR2 receptor and activation by IL8 leads to beta and gamma subunits release from Galpha (GNAI2 in neutrophils) and activation of several downstream signaling pathways including PI3K and MAPK pathways. The sequence is that of Interleukin-8 (CXCL8) from Sus scrofa (Pig).